The primary structure comprises 396 residues: MSSQQIRLATRGSDLALRQAGEVVDTLEDRRHDVELVEVETEGDRVTDALISDLGKTGAFVRALDQEVMEGTVDAAVHSMKDVPTEVPEDLVVAAVPHRENPADVLVTPDGTDLEDLPAGSVVGTASLRRGAQVQAHRPGLDVEPIRGNVGTRVEKLLAPALHREHERRTEAEKEAQSRDAREQRRGDYTADIEAGVENLDTEDGEEGAADDGDDTASSSEFEQSVTEWFDSLTPLQQSAMERDPDTEYDALVMARVGLERTGLLHHVGIEELSTGTHVPATGQGALCVTARRDSDVVDTLRDALEHVRTRVEVTAERVVLEELGGGCIAPIGVHALVQGDTIRTAVQVFSQDGSEQVGETRELDAEQYATDARELAADLRDRGAADLIEDARTEA.

The segment at 159-224 is disordered; it reads APALHREHER…DTASSSEFEQ (66 aa). The segment at 159 to 245 is insert; the sequence is APALHREHER…LQQSAMERDP (87 aa). A compositionally biased stretch (basic and acidic residues) spans 162-189; it reads LHREHERRTEAEKEAQSRDAREQRRGDY. Acidic residues predominate over residues 200 to 215; it reads LDTEDGEEGAADDGDD. An S-(dipyrrolylmethanemethyl)cysteine modification is found at Cys-328.

Belongs to the HMBS family. It depends on dipyrromethane as a cofactor.

The catalysed reaction is 4 porphobilinogen + H2O = hydroxymethylbilane + 4 NH4(+). Its pathway is porphyrin-containing compound metabolism; protoporphyrin-IX biosynthesis; coproporphyrinogen-III from 5-aminolevulinate: step 2/4. Its function is as follows. Tetrapolymerization of the monopyrrole PBG into the hydroxymethylbilane pre-uroporphyrinogen in several discrete steps. The sequence is that of Probable porphobilinogen deaminase (hemC) from Halobacterium salinarum (strain ATCC 700922 / JCM 11081 / NRC-1) (Halobacterium halobium).